A 150-amino-acid polypeptide reads, in one-letter code: L-alanine exporter AlaE (150 aa).

The next 4 membrane-spanning stretches (helical) occupy residues 17–37 (FAMV…VSGM), 48–68 (LSIP…DYVL), 86–106 (LVAY…TVGA), and 111–131 (IITA…LYGY).

This sequence belongs to the AlaE exporter family.

Its subcellular location is the cell inner membrane. Exports L-alanine. This Vibrio cholerae serotype O1 (strain ATCC 39315 / El Tor Inaba N16961) protein is L-alanine exporter AlaE.